The sequence spans 163 residues: Nucleotide-binding protein CGSHiGG_08790 (163 aa).

Belongs to the YajQ family.

Its function is as follows. Nucleotide-binding protein. The polypeptide is Nucleotide-binding protein CGSHiGG_08790 (Haemophilus influenzae (strain PittGG)).